Reading from the N-terminus, the 495-residue chain is Cobyric acid synthase (495 aa).

Residues 253-446 form the GATase cobBQ-type domain; sequence KISIAIVYFP…FHGIFDGSAF (194 aa). Cys-334 functions as the Nucleophile in the catalytic mechanism. Residue His-438 is part of the active site.

This sequence belongs to the CobB/CobQ family. CobQ subfamily.

Its pathway is cofactor biosynthesis; adenosylcobalamin biosynthesis. Functionally, catalyzes amidations at positions B, D, E, and G on adenosylcobyrinic A,C-diamide. NH(2) groups are provided by glutamine, and one molecule of ATP is hydrogenolyzed for each amidation. The polypeptide is Cobyric acid synthase (Chlorobium phaeobacteroides (strain BS1)).